The following is a 391-amino-acid chain: Transaldolase (391 aa).

The segment at 1-329 (MGKNLLEQLR…RLKVLDGQEH (329 aa)) is transaldolase. The Schiff-base intermediate with substrate role is filled by lysine 136. EF-hand domains follow at residues 329-364 (HIKH…FDAL) and 365-387 (DRDH…AFRL). Residues aspartate 342, aspartate 344, aspartate 346, glutamate 353, aspartate 365, aspartate 367, aspartate 369, lysine 371, and glutamate 376 each coordinate Ca(2+).

The protein belongs to the transaldolase family. Type 1 subfamily.

It localises to the cytoplasm. It carries out the reaction D-sedoheptulose 7-phosphate + D-glyceraldehyde 3-phosphate = D-erythrose 4-phosphate + beta-D-fructose 6-phosphate. It participates in carbohydrate degradation; pentose phosphate pathway; D-glyceraldehyde 3-phosphate and beta-D-fructose 6-phosphate from D-ribose 5-phosphate and D-xylulose 5-phosphate (non-oxidative stage): step 2/3. Functionally, transaldolase is important for the balance of metabolites in the pentose-phosphate pathway. This is Transaldolase from Synechocystis sp. (strain ATCC 27184 / PCC 6803 / Kazusa).